A 70-amino-acid chain; its full sequence is DNA-directed RNA polymerase subunit omega (70 aa).

The protein belongs to the RNA polymerase subunit omega family. The RNAP catalytic core consists of 2 alpha, 1 beta, 1 beta' and 1 omega subunit. When a sigma factor is associated with the core the holoenzyme is formed, which can initiate transcription.

It carries out the reaction RNA(n) + a ribonucleoside 5'-triphosphate = RNA(n+1) + diphosphate. Functionally, promotes RNA polymerase assembly. Latches the N- and C-terminal regions of the beta' subunit thereby facilitating its interaction with the beta and alpha subunits. The protein is DNA-directed RNA polymerase subunit omega of Staphylococcus haemolyticus (strain JCSC1435).